The chain runs to 310 residues: MESRARCIFLLLLQILTRARGDILPSVCGHSRDAGKIVGGQDALEGQWPWQVSLWITEDGHICGGSLIHEVWVLTAAHCFRRSLNPSFYHVKVGGLTLSLLEPHSTLVAVRNIFVHPTYLWADASSGDIALVQLDTPLRPSQFTPVCLPAAQTPLTPGTVCWVTGWGATQERDMASVLQELAVPLLDSEDCEKMYHTQGSSLSGERIIQSDMLCAGYVEGQKDSCQGDSGGPLVCSINSSWTQVGITSWGIGCARPYRPGVYTRVPTYVDWIQRILAENHSDAYGYHSSASAAYQMLLPVLLAVALPGSL.

A signal peptide spans Met1–Gly21. A propeptide spans Asp22 to Lys36 (activation peptide). The region spanning Ile37 to Ala277 is the Peptidase S1 domain. Cys63 and Cys79 are joined by a disulfide. Residues His78 and Asp128 each act as charge relay system in the active site. 3 cysteine pairs are disulfide-bonded: Cys161–Cys235, Cys191–Cys214, and Cys225–Cys253. The Charge relay system role is filled by Ser229. Asn238 and Asn279 each carry an N-linked (GlcNAc...) asparagine glycan. Ser281 carries GPI-anchor amidated serine lipidation. Residues Asp282 to Leu310 constitute a propeptide, removed in mature form.

The protein belongs to the peptidase S1 family. As to expression, expressed primarily in distal gut.

It localises to the cell membrane. Inhibited by aprotinin, leupeptin, benzamidine and soybean trypsin inhibitor. Partially inhibited by PMSF and DFP. Its function is as follows. Selectively cleaves synthetic peptide substrates of trypsin. Activates the epithelial sodium channel ENaC. This Mus musculus (Mouse) protein is Serine protease 30 (Prss30).